A 327-amino-acid chain; its full sequence is Movement protein (327 aa).

A coiled-coil region spans residues 297-327 (SASSSNTENELARVSQNIDLLKNKLKEICGE).

The protein belongs to the caulimoviridae movement protein family. Homotrimer, through the coiled-coil domain. Interacts with VAP. May interact (via N-terminus) with host prenylated Rab acceptor protein 1D (PRA1D).

The protein localises to the host cell junction. Its subcellular location is the host plasmodesma. In terms of biological role, transports viral genome to neighboring plant cells directly through plasmosdesmata, without any budding. The movement protein allows efficient cell to cell propagation, by bypassing the host cell wall barrier. Acts by forming tubules structures that increase the size exclusion limit (SEL) of plasmodesmata, thereby allowing viral ribonucleocapsids to spread directly to neighboring cells. This Arabidopsis thaliana (Mouse-ear cress) protein is Movement protein.